The chain runs to 149 residues: Putative pre-16S rRNA nuclease (149 aa).

The protein belongs to the YqgF nuclease family.

It localises to the cytoplasm. Could be a nuclease involved in processing of the 5'-end of pre-16S rRNA. This chain is Putative pre-16S rRNA nuclease, found in Synechococcus elongatus (strain ATCC 33912 / PCC 7942 / FACHB-805) (Anacystis nidulans R2).